Here is a 196-residue protein sequence, read N- to C-terminus: MLNPVWLKSLVAIVQTGSFQSAARALGLAQPTVSQHLQKLEEQVGVTLVQRSRSGCQPTTRALAFMPHATALLDMHARALEALHGNRERVGASSNIGTYLLQPFVRNYLTTANERGEVDLRIAANPDVADQLLAGQLDAAIMEWWLPHPDFEYRLWRVEPLVLIVSPDHALAEAGCIERDRLVDLPMLGGEPGSGT.

An HTH lysR-type domain is found at 1–59 (MLNPVWLKSLVAIVQTGSFQSAARALGLAQPTVSQHLQKLEEQVGVTLVQRSRSGCQPT). The segment at residues 19–38 (FQSAARALGLAQPTVSQHLQ) is a DNA-binding region (H-T-H motif).

The protein belongs to the LysR transcriptional regulatory family.

The chain is Putative HTH-type transcriptional regulator protein PtxE (ptxE) from Stutzerimonas stutzeri (Pseudomonas stutzeri).